A 142-amino-acid polypeptide reads, in one-letter code: MRQWEHYEHTADIGIRGYGDTLEEAFEAVALALFDVIVNVRKIEKKVEIDIEVEGEDLESLLYSFLEELLYLHDIEGLVFGDFKVKIEQKDGKYILRGKAYGEKFDPEKHEPKEEVKAITYHDMKIERLPDGRWMAQLVPDI.

Ca(2+) is bound by residues Asp-12, Asp-141, and Ile-142.

Belongs to the archease family.

In terms of biological role, activates the tRNA-splicing ligase complex by facilitating the enzymatic turnover of catalytic subunit RtcB. Acts by promoting the guanylylation of RtcB, a key intermediate step in tRNA ligation. Can also alter the NTP specificity of RtcB such that ATP, dGTP or ITP is used efficiently. The polypeptide is Protein archease (Pyrococcus furiosus (strain ATCC 43587 / DSM 3638 / JCM 8422 / Vc1)).